Reading from the N-terminus, the 211-residue chain is Ribosomal RNA large subunit methyltransferase E (211 aa).

S-adenosyl-L-methionine contacts are provided by glycine 60, tryptophan 62, aspartate 85, aspartate 101, and aspartate 126. The active-site Proton acceptor is lysine 166.

This sequence belongs to the class I-like SAM-binding methyltransferase superfamily. RNA methyltransferase RlmE family.

It is found in the cytoplasm. The catalysed reaction is uridine(2552) in 23S rRNA + S-adenosyl-L-methionine = 2'-O-methyluridine(2552) in 23S rRNA + S-adenosyl-L-homocysteine + H(+). Specifically methylates the uridine in position 2552 of 23S rRNA at the 2'-O position of the ribose in the fully assembled 50S ribosomal subunit. In Bordetella petrii (strain ATCC BAA-461 / DSM 12804 / CCUG 43448), this protein is Ribosomal RNA large subunit methyltransferase E.